A 257-amino-acid polypeptide reads, in one-letter code: Ribonuclease HII (257 aa).

The RNase H type-2 domain occupies 71–257 (SLIAGIDEVG…TSFEPIKSML (187 aa)). D77, E78, and D172 together coordinate a divalent metal cation.

The protein belongs to the RNase HII family. Requires Mn(2+) as cofactor. Mg(2+) serves as cofactor.

The protein localises to the cytoplasm. It carries out the reaction Endonucleolytic cleavage to 5'-phosphomonoester.. Its function is as follows. Endonuclease that specifically degrades the RNA of RNA-DNA hybrids. This is Ribonuclease HII from Streptococcus uberis (strain ATCC BAA-854 / 0140J).